Consider the following 84-residue polypeptide: Cell division topological specificity factor (84 aa).

Belongs to the MinE family.

Functionally, prevents the cell division inhibition by proteins MinC and MinD at internal division sites while permitting inhibition at polar sites. This ensures cell division at the proper site by restricting the formation of a division septum at the midpoint of the long axis of the cell. The chain is Cell division topological specificity factor from Ralstonia pickettii (strain 12J).